Consider the following 225-residue polypeptide: MSDVAVAETPAVKTPTKASKATKAKATKIPKVKVVAAHPPFINMITEAVSNLKDRKGSSRVAIFKFITAKYTLGDQVNKTNAHLRSALKKGVVSKVLVQTNGIGANGRFRLAVAEKPPAVKKAATGEQKVMKTVAKKAVSGDKAKKTVAKKTGDKVKKVKSPKRIAKPAVKKVTKKAAAPTKSAANETAPKKAAATEAAPKKAAVTKAATKKTPARKAVGTAPKA.

The segment at 1–23 (MSDVAVAETPAVKTPTKASKATK) is disordered. S2 is subject to N-acetylserine. Residues 9 to 19 (TPAVKTPTKAS) are compositionally biased toward low complexity. Residues 37 to 113 (AHPPFINMIT…GANGRFRLAV (77 aa)) enclose the H15 domain. The span at 145 to 156 (KKTVAKKTGDKV) shows a compositional bias: basic and acidic residues. Positions 145-225 (KKTVAKKTGD…RKAVGTAPKA (81 aa)) are disordered. The segment covering 157–175 (KKVKSPKRIAKPAVKKVTK) has biased composition (basic residues). The segment covering 176-208 (KAAAPTKSAANETAPKKAAATEAAPKKAAVTKA) has biased composition (low complexity).

Belongs to the histone H1/H5 family.

It is found in the nucleus. It localises to the chromosome. Histones H1 are necessary for the condensation of nucleosome chains into higher-order structures. This is Histone H1.5 (hil-5) from Caenorhabditis elegans.